Consider the following 169-residue polypeptide: Peptide deformylase (169 aa).

C91 and H133 together coordinate Fe cation. Residue E134 is part of the active site. Residue H137 coordinates Fe cation.

The protein belongs to the polypeptide deformylase family. It depends on Fe(2+) as a cofactor.

The catalysed reaction is N-terminal N-formyl-L-methionyl-[peptide] + H2O = N-terminal L-methionyl-[peptide] + formate. In terms of biological role, removes the formyl group from the N-terminal Met of newly synthesized proteins. Requires at least a dipeptide for an efficient rate of reaction. N-terminal L-methionine is a prerequisite for activity but the enzyme has broad specificity at other positions. This is Peptide deformylase from Klebsiella pneumoniae (strain 342).